The primary structure comprises 1521 residues: Retroelement silencing factor 1 (1521 aa).

Lys223 participates in a covalent cross-link: Glycyl lysine isopeptide (Lys-Gly) (interchain with G-Cter in SUMO2). A disordered region spans residues 621-640; that stretch reads EKQHKPIQGDPDIADSSLGK. Ser910 carries the phosphoserine modification. The residue at position 996 (Thr996) is a Phosphothreonine. Composition is skewed to polar residues over residues 1093–1105 and 1124–1142; these read KNMP…SQES and LSSN…QSVS. Disordered stretches follow at residues 1093-1147, 1204-1230, and 1312-1335; these read KNMP…EKKK, ERAS…KSTR, and EASR…PDKM. At Ser1142 the chain carries Phosphoserine. Residues 1214–1228 show a composition bias toward low complexity; the sequence is PSPESSDPKGSSSKS. A compositionally biased stretch (basic and acidic residues) spans 1325–1335; that stretch reads GKFDGKQPDKM. Residue Lys1411 forms a Glycyl lysine isopeptide (Lys-Gly) (interchain with G-Cter in SUMO2) linkage. Disordered stretches follow at residues 1425–1444 and 1457–1485; these read DKQD…VQVS and IPTR…SADE. Residues 1467–1476 show a composition bias toward basic and acidic residues; it reads SQRDSADSRL. Phosphoserine is present on residues Ser1482 and Ser1514.

As to quaternary structure, interacts with SETDB1.

The protein resides in the nucleus. Functionally, plays a role in the regulation of imprinted gene expression, regulates repressive epigenetic modifications associated with SETDB1. Required for the recruitment or accumulation of SETDB1 to the endogenous retroviruses (ERVs) and maintenance of repressive chromatin configuration, contributing to a subset of the SETDB1-dependent ERV silencing in embryonic stem cells. This is Retroelement silencing factor 1 from Mus musculus (Mouse).